A 301-amino-acid polypeptide reads, in one-letter code: Homoserine O-acetyltransferase (301 aa).

Cys-142 serves as the catalytic Acyl-thioester intermediate. Substrate contacts are provided by Lys-163 and Ser-192. Residue His-235 is the Proton acceptor of the active site. Residue Glu-237 is part of the active site. Arg-249 is a binding site for substrate.

This sequence belongs to the MetA family.

The protein resides in the cytoplasm. It carries out the reaction L-homoserine + acetyl-CoA = O-acetyl-L-homoserine + CoA. It functions in the pathway amino-acid biosynthesis; L-methionine biosynthesis via de novo pathway; O-acetyl-L-homoserine from L-homoserine: step 1/1. In terms of biological role, transfers an acetyl group from acetyl-CoA to L-homoserine, forming acetyl-L-homoserine. The chain is Homoserine O-acetyltransferase from Lachnoclostridium phytofermentans (strain ATCC 700394 / DSM 18823 / ISDg) (Clostridium phytofermentans).